Consider the following 20-residue polypeptide: Cytolysin tenebrosin-A (20 aa).

A plays an important role in the hemolytic activity region spans residues Ala3–Ala12. The interval Gly11 to Gln20 is N-terminal region.

Belongs to the actinoporin family. Sea anemone subfamily. Octamer or nonamer in membranes. Monomer in the soluble state.

It is found in the secreted. Its subcellular location is the nematocyst. The protein resides in the target cell membrane. In terms of biological role, pore-forming protein that forms cations-selective hydrophilic pores of around 1 nm and causes cardiac stimulation and cytolysis. Pore formation is a multi-step process that involves specific recognition of membrane sphingomyelin (but neither cholesterol nor phosphatidylcholine) using aromatic rich region and adjacent phosphocholine (POC) binding site, firm binding to the membrane (mainly driven by hydrophobic interactions) accompanied by the transfer of the N-terminal region to the lipid-water interface and finally pore formation after oligomerization of monomers. The polypeptide is Cytolysin tenebrosin-A (Actinia tenebrosa (Australian red waratah sea anemone)).